The sequence spans 882 residues: DNA mismatch repair protein MutS (882 aa).

ATP is bound at residue 629–636; sequence GPNMGGKS.

It belongs to the DNA mismatch repair MutS family.

Functionally, this protein is involved in the repair of mismatches in DNA. It is possible that it carries out the mismatch recognition step. This protein has a weak ATPase activity. In Ralstonia pickettii (strain 12J), this protein is DNA mismatch repair protein MutS.